A 118-amino-acid chain; its full sequence is YGPGVRVVVHQNQRLGYRNNGIVKTAVMRVFDGRANSYVNKHPAGQPYLRMPIWTPGVRVHQNTDLGYRKNAFREYMRWMGKSCALNVRERYTLNPDQRRFLNIPGARMPIRTPGAFR.

The protein is Vitelline coat lysin of Tegula pfeifferi (Pfeiffer's top shell).